The primary structure comprises 536 residues: ATPase expression protein 3 (536 aa).

2 PPR repeats span residues 212–246 (TTTMFNDLIYYFGKKSDYASCREYYSQMKLEKKTP) and 386–421 (TTGSVNILLNAAAEKGRLDLAVLTYNSMKVQLGVTP).

The protein localises to the mitochondrion inner membrane. In terms of biological role, required for respiration. The polypeptide is ATPase expression protein 3 (AEP3) (Eremothecium gossypii (strain ATCC 10895 / CBS 109.51 / FGSC 9923 / NRRL Y-1056) (Yeast)).